The following is a 43-amino-acid chain: METATLIAIFISCLIVSFTGYALYTAFGQPSKELRDPFEEHED.

The chain crosses the membrane as a helical span at residues 7–27 (IAIFISCLIVSFTGYALYTAF).

This sequence belongs to the PsbN family.

It is found in the plastid. The protein localises to the chloroplast thylakoid membrane. May play a role in photosystem I and II biogenesis. This Psilotum nudum (Whisk fern) protein is Protein PsbN.